We begin with the raw amino-acid sequence, 437 residues long: Phosphomethylpyrimidine synthase (437 aa).

Residues Asn69, Met98, Tyr127, His163, 185-187 (SRG), 226-229 (DACR), and Glu265 each bind substrate. His269 is a binding site for Zn(2+). Tyr292 provides a ligand contact to substrate. His333 is a binding site for Zn(2+). Positions 409, 412, and 416 each coordinate [4Fe-4S] cluster.

This sequence belongs to the ThiC family. Requires [4Fe-4S] cluster as cofactor.

The enzyme catalyses 5-amino-1-(5-phospho-beta-D-ribosyl)imidazole + S-adenosyl-L-methionine = 4-amino-2-methyl-5-(phosphooxymethyl)pyrimidine + CO + 5'-deoxyadenosine + formate + L-methionine + 3 H(+). Its pathway is cofactor biosynthesis; thiamine diphosphate biosynthesis. In terms of biological role, catalyzes the synthesis of the hydroxymethylpyrimidine phosphate (HMP-P) moiety of thiamine from aminoimidazole ribotide (AIR) in a radical S-adenosyl-L-methionine (SAM)-dependent reaction. The chain is Phosphomethylpyrimidine synthase from Clostridium novyi (strain NT).